A 575-amino-acid chain; its full sequence is Eukaryotic translation initiation factor 3 subunit D (575 aa).

Disordered regions lie at residues Pro36–Arg66 and Ser103–Val177. A compositionally biased stretch (basic and acidic residues) spans Lys39–Gly59. Positions Phe109–Gly144 are enriched in gly residues. Over residues Gly163–Asp174 the composition is skewed to basic and acidic residues. The tract at residues Asn302–Pro316 is RNA gate.

The protein belongs to the eIF-3 subunit D family. In terms of assembly, component of the eukaryotic translation initiation factor 3 (eIF-3) complex.

It is found in the cytoplasm. Functionally, mRNA cap-binding component of the eukaryotic translation initiation factor 3 (eIF-3) complex, which is involved in protein synthesis of a specialized repertoire of mRNAs and, together with other initiation factors, stimulates binding of mRNA and methionyl-tRNAi to the 40S ribosome. The eIF-3 complex specifically targets and initiates translation of a subset of mRNAs involved in cell proliferation. In the eIF-3 complex, eif3d specifically recognizes and binds the 7-methylguanosine cap of a subset of mRNAs. This is Eukaryotic translation initiation factor 3 subunit D from Phaeosphaeria nodorum (strain SN15 / ATCC MYA-4574 / FGSC 10173) (Glume blotch fungus).